Reading from the N-terminus, the 194-residue chain is Peptidyl-tRNA hydrolase (194 aa).

Y17 contributes to the tRNA binding site. The active-site Proton acceptor is the H22. TRNA contacts are provided by F68, N70, and N116.

It belongs to the PTH family. In terms of assembly, monomer.

The protein resides in the cytoplasm. The catalysed reaction is an N-acyl-L-alpha-aminoacyl-tRNA + H2O = an N-acyl-L-amino acid + a tRNA + H(+). Its function is as follows. Hydrolyzes ribosome-free peptidyl-tRNAs (with 1 or more amino acids incorporated), which drop off the ribosome during protein synthesis, or as a result of ribosome stalling. Catalyzes the release of premature peptidyl moieties from peptidyl-tRNA molecules trapped in stalled 50S ribosomal subunits, and thus maintains levels of free tRNAs and 50S ribosomes. The sequence is that of Peptidyl-tRNA hydrolase from Actinobacillus pleuropneumoniae serotype 5b (strain L20).